The primary structure comprises 152 residues: Xanthine-guanine phosphoribosyltransferase (152 aa).

Residues 37–38, arginine 69, and 88–96 each bind 5-phospho-alpha-D-ribose 1-diphosphate; these read RG and DDLVDTGGT. Position 69 (arginine 69) interacts with GMP. Aspartate 89 contacts Mg(2+). Aspartate 92 and isoleucine 135 together coordinate guanine. Residues aspartate 92 and isoleucine 135 each coordinate xanthine. Residues 92–96 and 134–135 contribute to the GMP site; these read DTGGT and WI.

Belongs to the purine/pyrimidine phosphoribosyltransferase family. XGPT subfamily. In terms of assembly, homotetramer. The cofactor is Mg(2+).

The protein localises to the cell inner membrane. It carries out the reaction GMP + diphosphate = guanine + 5-phospho-alpha-D-ribose 1-diphosphate. It catalyses the reaction XMP + diphosphate = xanthine + 5-phospho-alpha-D-ribose 1-diphosphate. The catalysed reaction is IMP + diphosphate = hypoxanthine + 5-phospho-alpha-D-ribose 1-diphosphate. Its pathway is purine metabolism; GMP biosynthesis via salvage pathway; GMP from guanine: step 1/1. The protein operates within purine metabolism; XMP biosynthesis via salvage pathway; XMP from xanthine: step 1/1. Functionally, purine salvage pathway enzyme that catalyzes the transfer of the ribosyl-5-phosphate group from 5-phospho-alpha-D-ribose 1-diphosphate (PRPP) to the N9 position of the 6-oxopurines guanine and xanthine to form the corresponding ribonucleotides GMP (guanosine 5'-monophosphate) and XMP (xanthosine 5'-monophosphate), with the release of PPi. To a lesser extent, also acts on hypoxanthine. In Shigella boydii serotype 18 (strain CDC 3083-94 / BS512), this protein is Xanthine-guanine phosphoribosyltransferase.